The sequence spans 791 residues: Phenylalanine--tRNA ligase beta subunit (791 aa).

Residues 39–149 enclose the tRNA-binding domain; that stretch reads GDEIQNVVTG…SDTAIGKDIK (111 aa). Positions 403–478 constitute a B5 domain; that stretch reads IKERNLKVDS…RIYGYNNIPT (76 aa). Positions 456, 462, 465, and 466 each coordinate Mg(2+). The FDX-ACB domain maps to 698 to 791; that stretch reads PKFPAVDRDM…LENNLGAELR (94 aa).

It belongs to the phenylalanyl-tRNA synthetase beta subunit family. Type 1 subfamily. Tetramer of two alpha and two beta subunits. Mg(2+) is required as a cofactor.

The protein localises to the cytoplasm. It carries out the reaction tRNA(Phe) + L-phenylalanine + ATP = L-phenylalanyl-tRNA(Phe) + AMP + diphosphate + H(+). The sequence is that of Phenylalanine--tRNA ligase beta subunit from Clostridium tetani (strain Massachusetts / E88).